A 314-amino-acid polypeptide reads, in one-letter code: Glycerol-3-phosphate dehydrogenase [NAD(P)+] (314 aa).

Positions 11, 30, and 96 each coordinate NADPH. Sn-glycerol 3-phosphate contacts are provided by lysine 96, glycine 124, and serine 126. Alanine 128 serves as a coordination point for NADPH. Residues lysine 179, aspartate 232, serine 242, arginine 243, and asparagine 244 each coordinate sn-glycerol 3-phosphate. Residue lysine 179 is the Proton acceptor of the active site. NADPH is bound at residue arginine 243. Glutamate 264 is a binding site for NADPH.

Belongs to the NAD-dependent glycerol-3-phosphate dehydrogenase family.

The protein localises to the cytoplasm. It carries out the reaction sn-glycerol 3-phosphate + NAD(+) = dihydroxyacetone phosphate + NADH + H(+). The enzyme catalyses sn-glycerol 3-phosphate + NADP(+) = dihydroxyacetone phosphate + NADPH + H(+). The protein operates within membrane lipid metabolism; glycerophospholipid metabolism. Catalyzes the reduction of the glycolytic intermediate dihydroxyacetone phosphate (DHAP) to sn-glycerol 3-phosphate (G3P), the key precursor for phospholipid synthesis. This is Glycerol-3-phosphate dehydrogenase [NAD(P)+] from Paracoccus denitrificans (strain Pd 1222).